The following is a 204-amino-acid chain: LexA repressor (204 aa).

The H-T-H motif DNA-binding region spans 29–49 (VREIGDAVGLMSSSTVHGHLQ). Active-site for autocatalytic cleavage activity residues include serine 127 and lysine 164.

This sequence belongs to the peptidase S24 family. Homodimer.

It carries out the reaction Hydrolysis of Ala-|-Gly bond in repressor LexA.. Represses a number of genes involved in the response to DNA damage (SOS response), including recA and lexA. In the presence of single-stranded DNA, RecA interacts with LexA causing an autocatalytic cleavage which disrupts the DNA-binding part of LexA, leading to derepression of the SOS regulon and eventually DNA repair. The chain is LexA repressor from Desulfitobacterium hafniense (strain DSM 10664 / DCB-2).